The sequence spans 47 residues: MARNRCRSPSQSRCRRPRRRCRRRIRCCRRQRRVCCRRYTTTRCARQ.

The protein belongs to the protamine P1 family. As to expression, testis.

The protein localises to the nucleus. The protein resides in the chromosome. Protamines substitute for histones in the chromatin of sperm during the haploid phase of spermatogenesis. They compact sperm DNA into a highly condensed, stable and inactive complex. The polypeptide is Sperm protamine P1 (PRM1) (Orcinus orca (Killer whale)).